The following is a 200-amino-acid chain: LexA repressor (200 aa).

Catalysis depends on for autocatalytic cleavage activity residues Ser-121 and Lys-158.

It belongs to the peptidase S24 family. In terms of assembly, homodimer.

It carries out the reaction Hydrolysis of Ala-|-Gly bond in repressor LexA.. Functionally, binds a consensus sequence 5'-TGTTC-N(4)-GAACA-3'; some genes have a tandem consensus sequence and their binding is cooperative. Binds to the promoters of a number of genes, including lexA and splB. Represses a number of genes involved in the response to DNA damage (SOS response). The sequence is that of LexA repressor from Opitutus terrae (strain DSM 11246 / JCM 15787 / PB90-1).